Reading from the N-terminus, the 509-residue chain is Group 3 secretory phospholipase A2 (509 aa).

The N-terminal stretch at Met-1–Gly-19 is a signal peptide. The interval Glu-123–Arg-149 is disordered. The interval Gly-150–Thr-291 is phospholipase A2-like. Residues Trp-158, Gly-160, and Gly-162 each coordinate Ca(2+). 4 disulfide bridges follow: Cys-159-Cys-181, Cys-180-Cys-220, Cys-187-Cys-213, and Cys-211-Cys-244. Asn-167 is a glycosylation site (N-linked (GlcNAc...) asparagine). The active site involves His-184. Asp-185 provides a ligand contact to Ca(2+). The active site involves Asp-214. An N-linked (GlcNAc...) asparagine glycan is attached at Asn-280. Residues Trp-283 to Pro-354 form a disordered region. The span at Ser-284–Ser-296 shows a compositional bias: low complexity. Basic residues predominate over residues Pro-302 to Ser-322. N-linked (GlcNAc...) asparagine glycosylation is found at Asn-325, Asn-396, and Asn-439. The disordered stretch occupies residues Gln-458 to Gly-482. Over residues Gln-463–Gln-473 the composition is skewed to basic and acidic residues.

It belongs to the phospholipase A2 family. Ca(2+) is required as a cofactor. In terms of processing, N-glycosylation does not affect the catalytic activity, but is required for proper secretion. A nonglycosylated form is observed in several cell types. In several cell types, the N- and C-termini are cleaved off. Expressed in kidney, heart, liver, and skeletal muscle. Also present in placenta and peripheral blood leukocytes. Not detected in colon, thymus, spleen and small intestine. In lung, expressed in bronchial epithelial cells and alveolar macrophages, but scarcely detected in alveolar epithelium, arterial walls and interstitial fibroblasts (at protein level). In joints of osteoarthritis and rheumatoid arthritis, expressed in endothelial cells (at protein level). In normal heart, detected in some vessels. In myocardial tissues with acute infarction, expressed in vascular endothelial cells adjacent to cardiomyocytes and those in lesions with granulation. Expression in cardiomyocytes is scarce (at protein level). In uterus, breast and colon cancers, detected in tumor cells and neighboring microvascular endothelium, but not in normal glandular tissues (at protein level). Expressed in dermal resting mast cells (at protein level) and pulmonary mast cells. Expressed in neuronal fibers (at protein level). Highly expressed in dorsal root ganglia neurons (at protein level). Expressed in Purkinje cells in cerebellum (at protein level). In stomach is preferentially expressed in neuronal fibers and in microvascular endothelium. Sparsely expressed in normal aorta (at protein level). Highly expressed in macrophages and smooth muscle cells in aorta with atheroma.

The protein resides in the secreted. The protein localises to the cell membrane. It is found in the cytoplasm. Its subcellular location is the cytoskeleton. It localises to the microtubule organizing center. The protein resides in the centrosome. The protein localises to the centriole. It is found in the recycling endosome. It carries out the reaction a 1,2-diacyl-sn-glycero-3-phosphocholine + H2O = a 1-acyl-sn-glycero-3-phosphocholine + a fatty acid + H(+). It catalyses the reaction 1-hexadecanoyl-2-(9Z,12Z-octadecadienoyl)-sn-glycero-3-phosphocholine + H2O = (9Z,12Z)-octadecadienoate + 1-hexadecanoyl-sn-glycero-3-phosphocholine + H(+). The catalysed reaction is 1-hexadecanoyl-2-(5Z,8Z,11Z,14Z-eicosatetraenoyl)-sn-glycero-3-phosphocholine + H2O = 1-hexadecanoyl-sn-glycero-3-phosphocholine + (5Z,8Z,11Z,14Z)-eicosatetraenoate + H(+). The enzyme catalyses 1-hexadecanoyl-2-(9Z,12Z-octadecadienoyl)-sn-glycero-3-phosphoethanolamine + H2O = 1-hexadecanoyl-sn-glycero-3-phosphoethanolamine + (9Z,12Z)-octadecadienoate + H(+). It carries out the reaction 1-hexadecanoyl-2-(5Z,8Z,11Z,14Z-eicosatetraenoyl)-sn-glycero-3-phosphoethanolamine + H2O = 1-hexadecanoyl-sn-glycero-3-phosphoethanolamine + (5Z,8Z,11Z,14Z)-eicosatetraenoate + H(+). Its activity is regulated as follows. Arachidonic acid release is markedly increased by glypican, a glycosylphosphatidylinositol-anchored heparan sulfate proteoglycan. Its function is as follows. Secretory calcium-dependent phospholipase A2 that primarily targets extracellular phospholipids. Hydrolyzes the ester bond of the fatty acyl group attached at sn-2 position of phospholipids without apparent head group selectivity. Contributes to phospholipid remodeling of low-density lipoprotein (LDL) and high-density lipoprotein (HDL) particles. Hydrolyzes LDL phospholipids releasing unsaturated fatty acids that regulate macrophage differentiation toward foam cells. May act in an autocrine and paracrine manner. Secreted by immature mast cells, acts on nearby fibroblasts upstream to PTDGS to synthesize prostaglandin D2 (PGD2), which in turn promotes mast cell maturation and degranulation via PTGDR. Secreted by epididymal epithelium, acts on immature sperm cells within the duct, modulating the degree of unsaturation of the fatty acyl components of phosphatidylcholines required for acrosome assembly and sperm cell motility. Facilitates the replacement of fatty acyl chains in phosphatidylcholines in sperm membranes from omega-6 and omega-9 to omega-3 polyunsaturated fatty acids (PUFAs). Coupled to lipoxygenase pathway, may process omega-6 PUFAs to generate oxygenated lipid mediators in the male reproductive tract. At pericentrosomal preciliary compartment, negatively regulates ciliogenesis likely by regulating endocytotic recycling of ciliary membrane protein. Coupled to cyclooxygenase pathway provides arachidonate to generate prostaglandin E2 (PGE2), a potent immunomodulatory lipid in inflammation and tumorigenesis. At colonic epithelial barrier, preferentially hydrolyzes phospholipids having arachidonate and docosahexaenoate at sn-2 position, contributing to the generation of oxygenated metabolites involved in colonic stem cell homeostasis. Releases C16:0 and C18:0 lysophosphatidylcholine subclasses from neuron plasma membranes and promotes neurite outgrowth and neuron survival. The polypeptide is Group 3 secretory phospholipase A2 (Homo sapiens (Human)).